The sequence spans 108 residues: Nucleoid-associated protein BH02310 (108 aa).

The protein belongs to the YbaB/EbfC family. As to quaternary structure, homodimer.

The protein localises to the cytoplasm. The protein resides in the nucleoid. In terms of biological role, binds to DNA and alters its conformation. May be involved in regulation of gene expression, nucleoid organization and DNA protection. The chain is Nucleoid-associated protein BH02310 from Bartonella henselae (strain ATCC 49882 / DSM 28221 / CCUG 30454 / Houston 1) (Rochalimaea henselae).